A 219-amino-acid chain; its full sequence is Uracil-DNA glycosylase (219 aa).

The active-site Proton acceptor is aspartate 61.

Belongs to the uracil-DNA glycosylase (UDG) superfamily. UNG family.

The protein resides in the cytoplasm. The catalysed reaction is Hydrolyzes single-stranded DNA or mismatched double-stranded DNA and polynucleotides, releasing free uracil.. In terms of biological role, excises uracil residues from the DNA which can arise as a result of misincorporation of dUMP residues by DNA polymerase or due to deamination of cytosine. The polypeptide is Uracil-DNA glycosylase (Haemophilus influenzae (strain PittEE)).